Consider the following 149-residue polypeptide: uncharacterized protein (149 aa).

The 149-residue stretch at 1–149 folds into the N-acetyltransferase domain; it reads MNIRQAKTSD…VHYCLNVPAK (149 aa).

Belongs to the acetyltransferase family.

This is an uncharacterized protein from Bacillus subtilis (strain 168).